The following is a 130-amino-acid chain: Small ribosomal subunit protein uS9 (130 aa).

Belongs to the universal ribosomal protein uS9 family.

The chain is Small ribosomal subunit protein uS9 from Tolumonas auensis (strain DSM 9187 / NBRC 110442 / TA 4).